The following is a 202-amino-acid chain: Putative scarecrow-like protein 16 (202 aa).

The interval 1–26 is VHIID; the sequence is MQIPTLIDSMANKLHKKPPPLLKLTV. The GRAS domain occupies 1–202; the sequence is MQIPTLIDSM…RVERLEPKSR (202 aa). The tract at residues 45–82 is leucine repeat II (LRII); that stretch reads ELGSKLVNFATTRNVAMEFRIISSSYSDGLSSLIEQLR. Residues 92-184 are PFYRE; the sequence is LVVNCHMMLH…EADISWKIDN (93 aa). Residues 187 to 202 are SAW; sequence AKEGAERVERLEPKSR.

The protein belongs to the GRAS family. In terms of tissue distribution, expressed in seedlings, leaves and flowers.

It localises to the nucleus. Probable transcription factor involved in plant development. The chain is Putative scarecrow-like protein 16 (SCL16) from Arabidopsis thaliana (Mouse-ear cress).